Consider the following 198-residue polypeptide: Recombination protein RecR (198 aa).

A C4-type zinc finger spans residues 57 to 72 (CSVCGHITDRDPCYIC). The Toprim domain maps to 80–175 (SVVCVVQEPK…KVTRIAHGLP (96 aa)).

This sequence belongs to the RecR family.

In terms of biological role, may play a role in DNA repair. It seems to be involved in an RecBC-independent recombinational process of DNA repair. It may act with RecF and RecO. This Bacillus anthracis (strain A0248) protein is Recombination protein RecR.